A 239-amino-acid polypeptide reads, in one-letter code: Sugar fermentation stimulation protein homolog (239 aa).

The protein belongs to the SfsA family.

The chain is Sugar fermentation stimulation protein homolog from Synechococcus sp. (strain JA-3-3Ab) (Cyanobacteria bacterium Yellowstone A-Prime).